We begin with the raw amino-acid sequence, 289 residues long: 4-hydroxybenzoate octaprenyltransferase (289 aa).

9 helical membrane passes run 19 to 39, 42 to 62, 85 to 105, 107 to 127, 134 to 154, 165 to 185, 211 to 231, 233 to 253, and 265 to 285; these read IPIL…SHGL, ISYL…GCII, GQLS…VAFI, VLFL…LAIL, FFAI…FMAF, AWIF…IYAL, ILLF…YCDF, SFFY…YFLY, and FSAN…QYII.

It belongs to the UbiA prenyltransferase family. It depends on Mg(2+) as a cofactor.

It is found in the cell inner membrane. The enzyme catalyses all-trans-octaprenyl diphosphate + 4-hydroxybenzoate = 4-hydroxy-3-(all-trans-octaprenyl)benzoate + diphosphate. Its pathway is cofactor biosynthesis; ubiquinone biosynthesis. Its function is as follows. Catalyzes the prenylation of para-hydroxybenzoate (PHB) with an all-trans polyprenyl group. Mediates the second step in the final reaction sequence of ubiquinone-8 (UQ-8) biosynthesis, which is the condensation of the polyisoprenoid side chain with PHB, generating the first membrane-bound Q intermediate 3-octaprenyl-4-hydroxybenzoate. This Francisella tularensis subsp. holarctica (strain FTNF002-00 / FTA) protein is 4-hydroxybenzoate octaprenyltransferase.